The chain runs to 390 residues: Pre-mycofactocin synthase (390 aa).

Residues 1 to 383 form the FMN hydroxy acid dehydrogenase domain; it reads MADEWFETVA…RSDDILIPAD (383 aa). 4 residues coordinate FMN: serine 108, glutamine 128, threonine 156, and lysine 254. Histidine 278 (proton acceptor) is an active-site residue. FMN contacts are provided by residues 309–313 and 332–333; these read DGGIR and GR.

Belongs to the FMN-dependent alpha-hydroxy acid dehydrogenase family. Requires FMN as cofactor.

It carries out the reaction 3-amino-5-[(4-hydroxyphenyl)methyl]-4,4-dimethyl-2-pyrrolidin-2-one + O2 + H2O = pre-mycofactocin + H2O2 + NH4(+). Its function is as follows. Involved in the biosynthesis of the enzyme cofactor mycofactocin (MFT). Catalyzes the oxidative deamination of AHDP (3-amino-5-[(4-hydroxyphenyl)methyl]-4,4-dimethyl-2-pyrrolidin-2-one), forming an alpha-keto amide moiety on the resulting molecule, which is called pre-mycofactocin (PMFT). This reaction occurs via a 5-[(4-hydroxyphenyl)methyl]-3-imino-4,4-dimethylpyrrolidin-2-one intermediate, which converts to PMFT. The alpha-keto amide moiety is the redox-active center for the redox activity of mycofactocin. The protein is Pre-mycofactocin synthase of Mycobacterium ulcerans (strain Agy99).